Reading from the N-terminus, the 578-residue chain is MKASRFFIGTLKEAPADAEIVSHKLMVRAGMIRRVAGGIYNYLPVGLRSIRKVEAIVREEMNRAGAIELLMPAVQPAELWQESGRWEQYGPELLRFKDRKDNDFVIGPTHEEVVTDIARNQIKSYRQMPVNFYQIQTKFRDEIRPRFGVMRGREFIMKDAYSFDKDAAGLNESYRKMYDAYVRIFSRLGLEFRAVAADSGSIGGNFSHEFHVIADTGEDAIAYCPTSEFAANVEAAEALPLIAERAAPAEAMEKVATPGKAKCEAVAELLSIPLERTIKSIVLATDNEGAEPTIWLVMLRGDHDLNEIKVSKLPGLKNHRFATEQEIVEWFGTPPGYLGPVGTKKPVKVIADRTVANMSDFVVGANEVDYHIAGVNWGRDLPEPDVADVRNVKKGDPSPDGKGVIDICRGIEVGHVFQLGTKYSEAMGATFLDESGKPQPMLMGCYGVGITRILGAAIEQNFDDRGIIWPESIAPFEVVLCPMGYDRSDLVRETADKLYAELVAAGIDVILDDRGERPGVMFADWELIGVPHRLVIGERGLKEGKIEYQGRRDAEATLLPADTAAATVAEKIRAALAH.

It belongs to the class-II aminoacyl-tRNA synthetase family. ProS type 1 subfamily. In terms of assembly, homodimer.

It is found in the cytoplasm. It catalyses the reaction tRNA(Pro) + L-proline + ATP = L-prolyl-tRNA(Pro) + AMP + diphosphate. In terms of biological role, catalyzes the attachment of proline to tRNA(Pro) in a two-step reaction: proline is first activated by ATP to form Pro-AMP and then transferred to the acceptor end of tRNA(Pro). As ProRS can inadvertently accommodate and process non-cognate amino acids such as alanine and cysteine, to avoid such errors it has two additional distinct editing activities against alanine. One activity is designated as 'pretransfer' editing and involves the tRNA(Pro)-independent hydrolysis of activated Ala-AMP. The other activity is designated 'posttransfer' editing and involves deacylation of mischarged Ala-tRNA(Pro). The misacylated Cys-tRNA(Pro) is not edited by ProRS. This chain is Proline--tRNA ligase, found in Burkholderia cenocepacia (strain ATCC BAA-245 / DSM 16553 / LMG 16656 / NCTC 13227 / J2315 / CF5610) (Burkholderia cepacia (strain J2315)).